The following is a 73-amino-acid chain: MNVGDRVRVKESVVVYHHPDHRNQAFDLKDAEGEIAAILTEWNGKPISANFPYLVSFSNKFRAHLRDFELEVI.

The segment at 43–46 (NGKP) is interaction with ferredoxin.

Belongs to the ferredoxin thioredoxin reductase alpha subunit family. As to quaternary structure, heterodimer of subunit A (variable subunit) and subunit B (catalytic subunit). Heterodimeric FTR forms a complex with ferredoxin and thioredoxin.

Its function is as follows. Variable subunit of the ferredoxin-thioredoxin reductase (FTR), which catalyzes the two-electron reduction of thioredoxins by the electrons provided by reduced ferredoxin. The sequence is that of Ferredoxin-thioredoxin reductase, variable chain (ftrV) from Synechococcus sp. (strain ATCC 27144 / PCC 6301 / SAUG 1402/1) (Anacystis nidulans).